A 187-amino-acid polypeptide reads, in one-letter code: ATP synthase subunit b (187 aa).

A helical transmembrane segment spans residues 36-53 (PYQWVSVAMLVLIAIMLW).

Belongs to the ATPase B chain family. F-type ATPases have 2 components, F(1) - the catalytic core - and F(0) - the membrane proton channel. F(1) has five subunits: alpha(3), beta(3), gamma(1), delta(1), epsilon(1). F(0) has four main subunits: a(1), b(2) and c(10-14). The alpha and beta chains form an alternating ring which encloses part of the gamma chain. F(1) is attached to F(0) by a central stalk formed by the gamma and epsilon chains, while a peripheral stalk is formed by the delta and b chains.

The protein localises to the cell inner membrane. In terms of biological role, f(1)F(0) ATP synthase produces ATP from ADP in the presence of a proton or sodium gradient. F-type ATPases consist of two structural domains, F(1) containing the extramembraneous catalytic core and F(0) containing the membrane proton channel, linked together by a central stalk and a peripheral stalk. During catalysis, ATP synthesis in the catalytic domain of F(1) is coupled via a rotary mechanism of the central stalk subunits to proton translocation. Functionally, component of the F(0) channel, it forms part of the peripheral stalk, linking F(1) to F(0). The sequence is that of ATP synthase subunit b from Erythrobacter litoralis (strain HTCC2594).